A 121-amino-acid chain; its full sequence is Small ribosomal subunit protein uS10 (121 aa).

A disordered region spans residues 1 to 20 (MTEQKAKSSKTSSEEAKKQK).

It belongs to the universal ribosomal protein uS10 family. Part of the 30S ribosomal subunit.

Involved in the binding of tRNA to the ribosomes. The polypeptide is Small ribosomal subunit protein uS10 (Mycoplasmoides gallisepticum (strain R(low / passage 15 / clone 2)) (Mycoplasma gallisepticum)).